The primary structure comprises 219 residues: Thiamine-phosphate synthase (219 aa).

4-amino-2-methyl-5-(diphosphooxymethyl)pyrimidine-binding positions include 48 to 52 (QFRQK) and N84. Mg(2+)-binding residues include D85 and D104. S123 lines the 4-amino-2-methyl-5-(diphosphooxymethyl)pyrimidine pocket. 150-152 (TQS) contributes to the 2-[(2R,5Z)-2-carboxy-4-methylthiazol-5(2H)-ylidene]ethyl phosphate binding site. A 4-amino-2-methyl-5-(diphosphooxymethyl)pyrimidine-binding site is contributed by K153. 2-[(2R,5Z)-2-carboxy-4-methylthiazol-5(2H)-ylidene]ethyl phosphate-binding positions include G181 and 199–200 (IS).

It belongs to the thiamine-phosphate synthase family. It depends on Mg(2+) as a cofactor.

The catalysed reaction is 2-[(2R,5Z)-2-carboxy-4-methylthiazol-5(2H)-ylidene]ethyl phosphate + 4-amino-2-methyl-5-(diphosphooxymethyl)pyrimidine + 2 H(+) = thiamine phosphate + CO2 + diphosphate. It carries out the reaction 2-(2-carboxy-4-methylthiazol-5-yl)ethyl phosphate + 4-amino-2-methyl-5-(diphosphooxymethyl)pyrimidine + 2 H(+) = thiamine phosphate + CO2 + diphosphate. It catalyses the reaction 4-methyl-5-(2-phosphooxyethyl)-thiazole + 4-amino-2-methyl-5-(diphosphooxymethyl)pyrimidine + H(+) = thiamine phosphate + diphosphate. It participates in cofactor biosynthesis; thiamine diphosphate biosynthesis; thiamine phosphate from 4-amino-2-methyl-5-diphosphomethylpyrimidine and 4-methyl-5-(2-phosphoethyl)-thiazole: step 1/1. Functionally, condenses 4-methyl-5-(beta-hydroxyethyl)thiazole monophosphate (THZ-P) and 2-methyl-4-amino-5-hydroxymethyl pyrimidine pyrophosphate (HMP-PP) to form thiamine monophosphate (TMP). This is Thiamine-phosphate synthase from Helicobacter pylori (strain Shi470).